The sequence spans 82 residues: MFEKVNRSGLIIYLYYNRDAKKLQDYGDITYHSKKHRYLQLYVPTQEVEQLVGRLSKEKFIKKVRVCHIQELETPFVGNLYR.

The protein belongs to the UPF0298 family.

The protein localises to the cytoplasm. In Streptococcus pneumoniae (strain CGSP14), this protein is UPF0298 protein SPCG_0698.